We begin with the raw amino-acid sequence, 185 residues long: Inner membrane-spanning protein YciB (185 aa).

Helical transmembrane passes span 19 to 39 (LGGV…QIVI), 53 to 73 (IMAS…EIRY), 76 to 96 (WKVT…QFQF), 118 to 138 (TLNF…IYIS), and 149 to 169 (FKSF…GVYI).

It belongs to the YciB family.

It is found in the cell inner membrane. In terms of biological role, plays a role in cell envelope biogenesis, maintenance of cell envelope integrity and membrane homeostasis. In Haemophilus influenzae (strain PittEE), this protein is Inner membrane-spanning protein YciB.